A 112-amino-acid chain; its full sequence is Carboxysome shell protein CcmK4 (112 aa).

A BMC domain is found at 6-92 (AVGSIETIGF…PHENVVAVLP (87 aa)).

Belongs to the bacterial microcompartments protein family. CcmK subfamily. As to quaternary structure, homohexamer. Interacts with full-length CcmM. Forms mixed heterohexamers with CcmK3, probably with 1:5 CcmK3:CcmK4 stoichiometry. Only very weak interactions with CcmK1 and CcmK2 were seen.

Its subcellular location is the carboxysome. Its function is as follows. A probably minor shell protein component of the carboxysome, a polyhedral inclusion where RuBisCO (ribulose bisphosphate carboxylase, rbcL-rbcS) is sequestered. The central pore probably regulates metabolite flux, as might the gaps between assembled homohexamers. Homohexamers make sheets that probably form the facets of the polyhedral carboxysome. This subunit probably makes both homohexamers and heterohexamers with CcmK3. The protein is Carboxysome shell protein CcmK4 of Synechocystis sp. (strain ATCC 27184 / PCC 6803 / Kazusa).